Consider the following 142-residue polypeptide: Large ribosomal subunit protein uL13 (142 aa).

The protein belongs to the universal ribosomal protein uL13 family. As to quaternary structure, part of the 50S ribosomal subunit.

In terms of biological role, this protein is one of the early assembly proteins of the 50S ribosomal subunit, although it is not seen to bind rRNA by itself. It is important during the early stages of 50S assembly. This Tolumonas auensis (strain DSM 9187 / NBRC 110442 / TA 4) protein is Large ribosomal subunit protein uL13.